A 238-amino-acid polypeptide reads, in one-letter code: ATP synthase subunit a (238 aa).

5 helical membrane-spanning segments follow: residues 18–38 (LTLLAVCIVTIAIVFAFVFWA), 76–96 (YSLLLFTIFLFVAVANNLGLF), 114–134 (NLAFDLALSLFITLMVHIEGV), 166–186 (SLAIRLFGNIFAGEVVTGLIV), and 193–213 (VYWWPIAFLVNMAWTAFSVFI).

Belongs to the ATPase A chain family. F-type ATPases have 2 components, CF(1) - the catalytic core - and CF(0) - the membrane proton channel. CF(1) has five subunits: alpha(3), beta(3), gamma(1), delta(1), epsilon(1). CF(0) has three main subunits: a(1), b(2) and c(9-12). The alpha and beta chains form an alternating ring which encloses part of the gamma chain. CF(1) is attached to CF(0) by a central stalk formed by the gamma and epsilon chains, while a peripheral stalk is formed by the delta and b chains.

It is found in the cell membrane. Key component of the proton channel; it plays a direct role in the translocation of protons across the membrane. In Streptococcus pyogenes serotype M1, this protein is ATP synthase subunit a.